Reading from the N-terminus, the 224-residue chain is 3-dehydroquinate dehydratase (224 aa).

3-dehydroquinate is bound by residues 30–32 and Arg-62; that span reads EWR. His-118 serves as the catalytic Proton donor/acceptor. The active-site Schiff-base intermediate with substrate is the Lys-143. Residues Arg-186, Ser-205, and Gln-209 each contribute to the 3-dehydroquinate site.

Belongs to the type-I 3-dehydroquinase family. In terms of assembly, homodimer.

The catalysed reaction is 3-dehydroquinate = 3-dehydroshikimate + H2O. The protein operates within metabolic intermediate biosynthesis; chorismate biosynthesis; chorismate from D-erythrose 4-phosphate and phosphoenolpyruvate: step 3/7. Involved in the third step of the chorismate pathway, which leads to the biosynthesis of aromatic amino acids. Catalyzes the cis-dehydration of 3-dehydroquinate (DHQ) and introduces the first double bond of the aromatic ring to yield 3-dehydroshikimate. The polypeptide is 3-dehydroquinate dehydratase (Streptococcus suis (strain 98HAH33)).